The sequence spans 293 residues: Lipoyl synthase (293 aa).

Positions 47, 52, 58, 73, 77, 80, and 285 each coordinate [4Fe-4S] cluster. The Radical SAM core domain occupies 59–274; sequence WSEGTATFMI…EKIGLELGFR (216 aa).

Belongs to the radical SAM superfamily. Lipoyl synthase family. Requires [4Fe-4S] cluster as cofactor.

It is found in the cytoplasm. It carries out the reaction [[Fe-S] cluster scaffold protein carrying a second [4Fe-4S](2+) cluster] + N(6)-octanoyl-L-lysyl-[protein] + 2 oxidized [2Fe-2S]-[ferredoxin] + 2 S-adenosyl-L-methionine + 4 H(+) = [[Fe-S] cluster scaffold protein] + N(6)-[(R)-dihydrolipoyl]-L-lysyl-[protein] + 4 Fe(3+) + 2 hydrogen sulfide + 2 5'-deoxyadenosine + 2 L-methionine + 2 reduced [2Fe-2S]-[ferredoxin]. It participates in protein modification; protein lipoylation via endogenous pathway; protein N(6)-(lipoyl)lysine from octanoyl-[acyl-carrier-protein]: step 2/2. In terms of biological role, catalyzes the radical-mediated insertion of two sulfur atoms into the C-6 and C-8 positions of the octanoyl moiety bound to the lipoyl domains of lipoate-dependent enzymes, thereby converting the octanoylated domains into lipoylated derivatives. This Christiangramia forsetii (strain DSM 17595 / CGMCC 1.15422 / KT0803) (Gramella forsetii) protein is Lipoyl synthase.